The sequence spans 436 residues: ATP-dependent RNA helicase RhlB (436 aa).

The Q motif motif lies at 9–37; the sequence is QKFADFPLHKEVHQALNEAGFEFCTPIQA. A Helicase ATP-binding domain is found at 40–219; sequence LPILLEKKDI…YDHMNEPEKV (180 aa). 53–60 contacts ATP; the sequence is AQTGTGKT. The DEAD box signature appears at 165 to 168; sequence DEAD. In terms of domain architecture, Helicase C-terminal spans 243–390; sequence KMPLLLSLLE…VTSYDSDALL (148 aa). Residues 392–436 form a disordered region; that stretch reads DIPPPVRIHRKPSTHTRNTRDRGASRPQGGQRSGPRRHDRTRRHS. A compositionally biased stretch (basic residues) spans 425–436; that stretch reads GPRRHDRTRRHS.

Belongs to the DEAD box helicase family. RhlB subfamily. In terms of assembly, component of the RNA degradosome, which is a multiprotein complex involved in RNA processing and mRNA degradation.

It localises to the cytoplasm. It carries out the reaction ATP + H2O = ADP + phosphate + H(+). Its function is as follows. DEAD-box RNA helicase involved in RNA degradation. Has RNA-dependent ATPase activity and unwinds double-stranded RNA. This chain is ATP-dependent RNA helicase RhlB, found in Shewanella halifaxensis (strain HAW-EB4).